A 317-amino-acid polypeptide reads, in one-letter code: uncharacterized protein (317 aa).

The next 7 helical transmembrane spans lie at 24–44 (ISII…TGIM), 63–83 (LSIS…SILA), 136–156 (LGVA…ISED), 187–207 (LIPI…IGFF), 229–249 (ILAL…GGFL), 252–272 (GILS…LTFS), and 295–315 (IVMV…AGLL).

This sequence to M.jannaschii MJ0880, MJ1556 and MJ1589.

It localises to the cell membrane. This is an uncharacterized protein from Methanocaldococcus jannaschii (strain ATCC 43067 / DSM 2661 / JAL-1 / JCM 10045 / NBRC 100440) (Methanococcus jannaschii).